The following is a 131-amino-acid chain: D-ribose pyranase (131 aa).

Histidine 20 acts as the Proton donor in catalysis. Substrate contacts are provided by residues aspartate 28, histidine 98, and 120–122; that span reads YAN.

The protein belongs to the RbsD / FucU family. RbsD subfamily. Homodecamer.

The protein localises to the cytoplasm. The enzyme catalyses beta-D-ribopyranose = beta-D-ribofuranose. The protein operates within carbohydrate metabolism; D-ribose degradation; D-ribose 5-phosphate from beta-D-ribopyranose: step 1/2. Its function is as follows. Catalyzes the interconversion of beta-pyran and beta-furan forms of D-ribose. In Bacillus cereus (strain ATCC 10987 / NRS 248), this protein is D-ribose pyranase.